A 1218-amino-acid polypeptide reads, in one-letter code: Coatomer subunit alpha-1 (1218 aa).

9 WD repeats span residues 7 to 48 (TKSN…DRFD), 49 to 88 (EHDGPVRGVHFHATQPLFVSGGDDYKIKVWNYKTHRCLFT), 91 to 132 (GHLD…AVLT), 133 to 172 (GHNHYVMCASFHPKEDLVVSASLDQTVRVWDIGALRKKTV), 202 to 241 (GHDRGVNWASFHPTLPLIVSGADDRQVKLWRMNDTKAWEV), 246 to 285 (GHMNNVSCVMFHAKQDIIVSNSEDKSIRIWDATKRTGIQT), 288 to 326 (REHDRFWILSAHPEMNLLAAGHDSGMIVFKLERERPAFS), 363 to 404 (SLNQ…AGRA), and 450 to 489 (PLPIATDAIYYAGTGNLLCKAEDRVTIFDLQQRLILGELQ). Residues 857-882 (NGGDGFDAEEGEANEEDGEEGGWDLE) are disordered. The span at 862 to 882 (FDAEEGEANEEDGEEGGWDLE) shows a compositional bias: acidic residues.

Oligomeric complex that consists of at least the alpha, beta, beta', gamma, delta, epsilon and zeta subunits.

The protein resides in the cytoplasm. It localises to the golgi apparatus membrane. Its subcellular location is the cytoplasmic vesicle. The protein localises to the COPI-coated vesicle membrane. Functionally, the coatomer is a cytosolic protein complex that binds to dilysine motifs and reversibly associates with Golgi non-clathrin-coated vesicles, which further mediate biosynthetic protein transport from the ER, via the Golgi up to the trans Golgi network. Coatomer complex is required for budding from Golgi membranes, and is essential for the retrograde Golgi-to-ER transport of dilysine-tagged proteins. The sequence is that of Coatomer subunit alpha-1 from Oryza sativa subsp. japonica (Rice).